Reading from the N-terminus, the 211-residue chain is MTGVFITLEGGDGVGKSTQSALLREWLEEQGHEVVVTREPGGSDLGQEIREIVLHRRGHIAPRAEALLYAADRAHHVETVVRPALERGAVVLQDRYLDSSVAYQGAGRVLDAAEIRDLSLWAAQGLLPDLTVLLDLDQAAARIRLDAARTRFDRLEAERADFHERVRQAFLGLAAAEPERFLVVDAGWPREVIAAEIRARAHVLIAAGASA.

An ATP-binding site is contributed by glycine 10–serine 17.

It belongs to the thymidylate kinase family.

It carries out the reaction dTMP + ATP = dTDP + ADP. In terms of biological role, phosphorylation of dTMP to form dTDP in both de novo and salvage pathways of dTTP synthesis. This is Thymidylate kinase from Clavibacter sepedonicus (Clavibacter michiganensis subsp. sepedonicus).